Here is a 278-residue protein sequence, read N- to C-terminus: Large ribosomal subunit protein uL2 (278 aa).

Positions 201–278 (HGNINDGKAG…IMRSRHQRKK (78 aa)) are disordered. A compositionally biased stretch (basic residues) spans 210–221 (GRSRWRGKRPHV).

The protein belongs to the universal ribosomal protein uL2 family. Part of the 50S ribosomal subunit. Forms a bridge to the 30S subunit in the 70S ribosome.

Functionally, one of the primary rRNA binding proteins. Required for association of the 30S and 50S subunits to form the 70S ribosome, for tRNA binding and peptide bond formation. It has been suggested to have peptidyltransferase activity; this is somewhat controversial. Makes several contacts with the 16S rRNA in the 70S ribosome. This is Large ribosomal subunit protein uL2 from Agrobacterium fabrum (strain C58 / ATCC 33970) (Agrobacterium tumefaciens (strain C58)).